Here is a 1225-residue protein sequence, read N- to C-terminus: DNA-directed RNA polymerase subunit beta' (1225 aa).

C60, C62, C75, and C78 together coordinate Zn(2+). Positions 450, 452, and 454 each coordinate Mg(2+). C818, C892, C899, and C902 together coordinate Zn(2+).

The protein belongs to the RNA polymerase beta' chain family. The RNAP catalytic core consists of 2 alpha, 1 beta, 1 beta' and 1 omega subunit. When a sigma factor is associated with the core the holoenzyme is formed, which can initiate transcription. It depends on Mg(2+) as a cofactor. The cofactor is Zn(2+).

It catalyses the reaction RNA(n) + a ribonucleoside 5'-triphosphate = RNA(n+1) + diphosphate. Its function is as follows. DNA-dependent RNA polymerase catalyzes the transcription of DNA into RNA using the four ribonucleoside triphosphates as substrates. The chain is DNA-directed RNA polymerase subunit beta' from Streptococcus pneumoniae serotype 19F (strain G54).